A 114-amino-acid chain; its full sequence is uncharacterized protein (114 aa).

The next 3 membrane-spanning stretches (helical) occupy residues 21–41, 65–85, and 93–113; these read LASSLLISFSSFLFISSVCLF, GCFSSSFLSLSCLMSTLSALI, and LSVFTVVVSASLGSVFTILTD.

It is found in the membrane. This is an uncharacterized protein from Saccharomyces cerevisiae (strain ATCC 204508 / S288c) (Baker's yeast).